Here is a 270-residue protein sequence, read N- to C-terminus: Protein US2 homolog (270 aa).

It belongs to the herpesviridae US2 family.

The polypeptide is Protein US2 homolog (MDV091) (Gallid herpesvirus 2 (strain Chicken/Md5/ATCC VR-987) (GaHV-2)).